The chain runs to 358 residues: UDP-N-acetylglucosamine--N-acetylmuramyl-(pentapeptide) pyrophosphoryl-undecaprenol N-acetylglucosamine transferase (358 aa).

UDP-N-acetyl-alpha-D-glucosamine contacts are provided by residues 11–13, Arg-163, Ser-191, Ile-245, and Gln-290; that span reads TGG.

This sequence belongs to the glycosyltransferase 28 family. MurG subfamily.

The protein resides in the cell inner membrane. The catalysed reaction is di-trans,octa-cis-undecaprenyl diphospho-N-acetyl-alpha-D-muramoyl-L-alanyl-D-glutamyl-meso-2,6-diaminopimeloyl-D-alanyl-D-alanine + UDP-N-acetyl-alpha-D-glucosamine = di-trans,octa-cis-undecaprenyl diphospho-[N-acetyl-alpha-D-glucosaminyl-(1-&gt;4)]-N-acetyl-alpha-D-muramoyl-L-alanyl-D-glutamyl-meso-2,6-diaminopimeloyl-D-alanyl-D-alanine + UDP + H(+). Its pathway is cell wall biogenesis; peptidoglycan biosynthesis. Functionally, cell wall formation. Catalyzes the transfer of a GlcNAc subunit on undecaprenyl-pyrophosphoryl-MurNAc-pentapeptide (lipid intermediate I) to form undecaprenyl-pyrophosphoryl-MurNAc-(pentapeptide)GlcNAc (lipid intermediate II). The sequence is that of UDP-N-acetylglucosamine--N-acetylmuramyl-(pentapeptide) pyrophosphoryl-undecaprenol N-acetylglucosamine transferase from Janthinobacterium sp. (strain Marseille) (Minibacterium massiliensis).